A 383-amino-acid chain; its full sequence is Arginine biosynthesis bifunctional protein ArgJ (383 aa).

Substrate contacts are provided by Thr146, Lys168, Thr179, Glu259, Asn378, and Ser383. Thr179 (nucleophile) is an active-site residue.

It belongs to the ArgJ family. As to quaternary structure, heterotetramer of two alpha and two beta chains.

It localises to the cytoplasm. It carries out the reaction N(2)-acetyl-L-ornithine + L-glutamate = N-acetyl-L-glutamate + L-ornithine. The enzyme catalyses L-glutamate + acetyl-CoA = N-acetyl-L-glutamate + CoA + H(+). It functions in the pathway amino-acid biosynthesis; L-arginine biosynthesis; L-ornithine and N-acetyl-L-glutamate from L-glutamate and N(2)-acetyl-L-ornithine (cyclic): step 1/1. It participates in amino-acid biosynthesis; L-arginine biosynthesis; N(2)-acetyl-L-ornithine from L-glutamate: step 1/4. Functionally, catalyzes two activities which are involved in the cyclic version of arginine biosynthesis: the synthesis of N-acetylglutamate from glutamate and acetyl-CoA as the acetyl donor, and of ornithine by transacetylation between N(2)-acetylornithine and glutamate. The protein is Arginine biosynthesis bifunctional protein ArgJ of Streptomyces coelicolor (strain ATCC BAA-471 / A3(2) / M145).